The sequence spans 359 residues: MDFDKQLFFNVEKIVELTEQLEKDLNKPNLSFEQIKVINKELKHKQPLIVKFKELQKLVENANEAEQILNNSSLKELHEEAKKELEKIKASLPSLEEEIKFLLLPVDENNQKNVIVEIRPAAGGDESCIFLSDLFNMYKNYCTSKNWTVELNEIIPASVGINFVSFAVNGTDVFAKLKFESGVHRVQRVPLTEAKGRVHTSTVTVAVLPQLEEVEITINPSDLRIDTYRASGAGGQHVNRTESAVRITHLPTGIVVACQEGKSQFSNRDKAMKMLRAKLWENAQNKQLSTQADLRKSQVGSGERAEKIRTYNYPQNRITDHRIKLTINKLNTVILGDLDEIIEALQADEKKQQLEKFIS.

Position 236 is an N5-methylglutamine (Q236).

The protein belongs to the prokaryotic/mitochondrial release factor family. In terms of processing, methylated by PrmC. Methylation increases the termination efficiency of RF1.

The protein resides in the cytoplasm. In terms of biological role, peptide chain release factor 1 directs the termination of translation in response to the peptide chain termination codons UAG and UAA. The polypeptide is Peptide chain release factor 1 (prfA) (Mycoplasma genitalium (strain ATCC 33530 / DSM 19775 / NCTC 10195 / G37) (Mycoplasmoides genitalium)).